The following is a 196-amino-acid chain: Rac-like GTP-binding protein RAC13 (196 aa).

13-20 (GDGAVGKT) serves as a coordination point for GTP. The Effector region signature appears at 35–43 (YVPTVFDNF). Residues 60 to 64 (DTAGQ) and 118 to 121 (TKLD) each bind GTP. Cys-193 bears the Cysteine methyl ester mark. Cys-193 is lipidated: S-geranylgeranyl cysteine. The propeptide at 194–196 (AFL) is removed in mature form.

This sequence belongs to the small GTPase superfamily. Rho family.

It is found in the cytoplasm. Its subcellular location is the membrane. Could participate in a signal transduction pathway that controls cytoskeletal organization. Functionally, inactive GDP-bound Rho GTPases reside in the cytosol, are found in a complex with Rho GDP-dissociation inhibitors (Rho GDIs), and are released from the GDI protein in order to translocate to membranes upon activation. This chain is Rac-like GTP-binding protein RAC13 (RAC13), found in Gossypium hirsutum (Upland cotton).